Here is a 200-residue protein sequence, read N- to C-terminus: NADH-quinone oxidoreductase chain 10 (200 aa).

The next 5 helical transmembrane spans lie at 2–22 (MTFA…MVVI), 26–46 (PVHS…LFVL), 51–71 (FVAM…FLFV), 90–110 (LPLA…AFSG), and 144–164 (VLMF…AIVL).

The protein belongs to the complex I subunit 6 family. NDH-1 is composed of at least 14 different subunits, Nqo1 to Nqo14. The complex has a L-shaped structure, with the hydrophobic arm (subunits Nqo7, Nqo8, Nqo10 to Nqo14) embedded in the inner membrane and the hydrophilic peripheral arm (subunits Nqo1 to Nqo6, Nqo9) protruding into the bacterial cytoplasm. The hydrophilic domain contains all the redox centers.

It localises to the cell inner membrane. It catalyses the reaction a quinone + NADH + 5 H(+)(in) = a quinol + NAD(+) + 4 H(+)(out). NDH-1 shuttles electrons from NADH, via FMN and iron-sulfur (Fe-S) centers, to quinones in the respiratory chain. The immediate electron acceptor for the enzyme in this species is believed to be ubiquinone. Couples the redox reaction to proton translocation (for every two electrons transferred, four hydrogen ions are translocated across the cytoplasmic membrane), and thus conserves the redox energy in a proton gradient. This is NADH-quinone oxidoreductase chain 10 from Paracoccus denitrificans.